Here is a 94-residue protein sequence, read N- to C-terminus: Small ribosomal subunit protein bS18 (94 aa).

This sequence belongs to the bacterial ribosomal protein bS18 family. In terms of assembly, part of the 30S ribosomal subunit. Forms a tight heterodimer with protein bS6.

Functionally, binds as a heterodimer with protein bS6 to the central domain of the 16S rRNA, where it helps stabilize the platform of the 30S subunit. This chain is Small ribosomal subunit protein bS18, found in Polaromonas naphthalenivorans (strain CJ2).